A 271-amino-acid chain; its full sequence is Ferric vulnibactin reductase VuuB (271 aa).

The FAD-binding FR-type domain occupies 8-131 (VYPMLLDFVR…IGPAGPDPLI (124 aa)).

Belongs to the SIP oxidoreductase family. As to quaternary structure, monomer. The cofactor is FAD.

It localises to the cytoplasm. The catalysed reaction is 2 a Fe(II)-siderophore + NAD(+) + H(+) = 2 a Fe(III)-siderophore + NADH. Its function is as follows. Ferric-siderophore reductase involved in iron removal from the siderophores after their transport into the cell. Acts as a major ferric-vulnibactin reductase catalyzing the reduction of Fe(3+)-vulnibactin, a catecholate siderophore synthesized by V.vulnificus. The chain is Ferric vulnibactin reductase VuuB from Vibrio vulnificus (strain CMCP6).